Reading from the N-terminus, the 172-residue chain is Adenine phosphoribosyltransferase (172 aa).

The protein belongs to the purine/pyrimidine phosphoribosyltransferase family. As to quaternary structure, homodimer.

The protein resides in the cytoplasm. It carries out the reaction AMP + diphosphate = 5-phospho-alpha-D-ribose 1-diphosphate + adenine. It participates in purine metabolism; AMP biosynthesis via salvage pathway; AMP from adenine: step 1/1. Functionally, catalyzes a salvage reaction resulting in the formation of AMP, that is energically less costly than de novo synthesis. The chain is Adenine phosphoribosyltransferase from Levilactobacillus brevis (strain ATCC 367 / BCRC 12310 / CIP 105137 / JCM 1170 / LMG 11437 / NCIMB 947 / NCTC 947) (Lactobacillus brevis).